Reading from the N-terminus, the 25-residue chain is Dermaseptin-5.1TR (25 aa).

Valine amide is present on valine 25.

In terms of tissue distribution, expressed by the skin glands.

Its subcellular location is the secreted. Has antimicrobial activity. This is Dermaseptin-5.1TR from Phyllomedusa trinitatis (Trinidad leaf frog).